Consider the following 199-residue polypeptide: MMEFVYPHTHLVAGVDEVGRGPLVGAVVTAAVILDPAKPIVGLNDSKKLSEKRRLALCDEIKEKALCWSLGRAEPHEIDELNILHATMLAMQRAVAGLSIVPEFVLIDGNRCPSLPMPSLAVVKGDSRVAEISAASILAKVTRDAEMATLDLAFPHYGFAQHKGYPTAVHLQKLQEHGATEHHRRSFGPVKRALGLASN.

In terms of domain architecture, RNase H type-2 spans 10 to 199; that stretch reads HLVAGVDEVG…VKRALGLASN (190 aa). A divalent metal cation-binding residues include aspartate 16, glutamate 17, and aspartate 108.

It belongs to the RNase HII family. It depends on Mn(2+) as a cofactor. Mg(2+) serves as cofactor.

The protein resides in the cytoplasm. The catalysed reaction is Endonucleolytic cleavage to 5'-phosphomonoester.. Its function is as follows. Endonuclease that specifically degrades the RNA of RNA-DNA hybrids. This is Ribonuclease HII from Klebsiella pneumoniae (strain 342).